The sequence spans 361 residues: Outer membrane protein P2 (361 aa).

An N-terminal signal peptide occupies residues 1–20 (MKKTLAALIVGAFAASAANA).

This sequence belongs to the Gram-negative porin family. In terms of assembly, homotrimer.

The protein resides in the cell outer membrane. In terms of biological role, forms pores that allow passive diffusion of small molecules across the outer membrane. The chain is Outer membrane protein P2 (ompP2) from Haemophilus influenzae.